A 301-amino-acid polypeptide reads, in one-letter code: GTP cyclohydrolase FolE2 (301 aa).

This sequence belongs to the GTP cyclohydrolase IV family.

It carries out the reaction GTP + H2O = 7,8-dihydroneopterin 3'-triphosphate + formate + H(+). It functions in the pathway cofactor biosynthesis; 7,8-dihydroneopterin triphosphate biosynthesis; 7,8-dihydroneopterin triphosphate from GTP: step 1/1. Its function is as follows. Converts GTP to 7,8-dihydroneopterin triphosphate. This chain is GTP cyclohydrolase FolE2, found in Pseudomonas syringae pv. syringae (strain B728a).